The primary structure comprises 155 residues: Cytochrome c-type biogenesis protein CcmE (155 aa).

The Cytoplasmic segment spans residues 1 to 8; sequence MHPKRKQR. A helical; Signal-anchor for type II membrane protein membrane pass occupies residues 9–29; it reads LILVLFVVLVSSVGVSLTLYA. Topologically, residues 30–155 are periplasmic; the sequence is LNENINLFYP…KTCKGISYDS (126 aa). Heme-binding residues include His124 and Tyr128.

This sequence belongs to the CcmE/CycJ family.

It is found in the cell inner membrane. Functionally, heme chaperone required for the biogenesis of c-type cytochromes. Transiently binds heme delivered by CcmC and transfers the heme to apo-cytochromes in a process facilitated by CcmF and CcmH. This chain is Cytochrome c-type biogenesis protein CcmE, found in Teredinibacter turnerae (strain ATCC 39867 / T7901).